We begin with the raw amino-acid sequence, 341 residues long: tRNA-specific 2-thiouridylase MnmA (341 aa).

Residues 8–15 (GMSGGVDS) and M34 contribute to the ATP site. C94 functions as the Nucleophile in the catalytic mechanism. C94 and C188 are oxidised to a cystine. Position 118 (G118) interacts with ATP. The interaction with tRNA stretch occupies residues 136 to 138 (KDQ). C188 serves as the catalytic Cysteine persulfide intermediate. An interaction with tRNA region spans residues 290–291 (RY).

Belongs to the MnmA/TRMU family.

The protein localises to the cytoplasm. It catalyses the reaction S-sulfanyl-L-cysteinyl-[protein] + uridine(34) in tRNA + AH2 + ATP = 2-thiouridine(34) in tRNA + L-cysteinyl-[protein] + A + AMP + diphosphate + H(+). Functionally, catalyzes the 2-thiolation of uridine at the wobble position (U34) of tRNA, leading to the formation of s(2)U34. The sequence is that of tRNA-specific 2-thiouridylase MnmA from Sulfurimonas denitrificans (strain ATCC 33889 / DSM 1251) (Thiomicrospira denitrificans (strain ATCC 33889 / DSM 1251)).